The chain runs to 84 residues: RNA-binding protein SAHV_0542 (84 aa).

It belongs to the eukaryotic ribosomal protein eL8 family.

The polypeptide is RNA-binding protein SAHV_0542 (Staphylococcus aureus (strain Mu3 / ATCC 700698)).